Reading from the N-terminus, the 643-residue chain is Nicastrin (643 aa).

Residues 1–20 form the signal peptide; it reads MRFKNVLVLLLLLVFSVINS. Residues 21 to 611 lie on the Extracellular side of the membrane; that stretch reads EPSAPATISD…VFKIGNSTTE (591 aa). Cysteine 42 and cysteine 54 are oxidised to a cystine. Asparagine 96 and asparagine 166 each carry an N-linked (GlcNAc...) asparagine glycan. 2 cysteine pairs are disulfide-bonded: cysteine 204–cysteine 210 and cysteine 308–cysteine 318. Residues asparagine 333 and asparagine 385 are each glycosylated (N-linked (GlcNAc...) asparagine). 3 cysteine pairs are disulfide-bonded: cysteine 479–cysteine 486, cysteine 540–cysteine 551, and cysteine 546–cysteine 556. Asparagine 584 is a glycosylation site (N-linked (GlcNAc...) asparagine). Residues 612 to 632 form a helical membrane-spanning segment; it reads IWFLVSGLIELLVSIGLILYV. The Cytoplasmic segment spans residues 633 to 643; it reads KKFLSNRYKLL.

This sequence belongs to the nicastrin family. In terms of assembly, component of the gamma-secretase complex, a complex composed of a presenilin homodimer, nicastrin, aph1 and pen2.

The protein resides in the membrane. Essential subunit of the gamma-secretase complex, an endoprotease complex that catalyzes the intramembrane cleavage of integral membrane proteins such as Notch receptors and APP (amyloid-beta precursor protein). The polypeptide is Nicastrin (Dictyostelium purpureum (Slime mold)).